Reading from the N-terminus, the 207-residue chain is Small ribosomal subunit protein uS4c (207 aa).

An S4 RNA-binding domain is found at 92–156 (MRLDNILFRL…YQSIITKRIE (65 aa)).

This sequence belongs to the universal ribosomal protein uS4 family. In terms of assembly, part of the 30S ribosomal subunit. Contacts protein S5. The interaction surface between S4 and S5 is involved in control of translational fidelity.

The protein localises to the plastid. Its subcellular location is the chloroplast. Functionally, one of the primary rRNA binding proteins, it binds directly to 16S rRNA where it nucleates assembly of the body of the 30S subunit. With S5 and S12 plays an important role in translational accuracy. The sequence is that of Small ribosomal subunit protein uS4c (rps4) from Equisetum pratense (Meadow horsetail).